The primary structure comprises 311 residues: Meteorin-like protein (311 aa).

The first 45 residues, 1-45 (MRGAVWAARRRAGQQWPRSPGPGPGPPPPPPLLLLLLLLLGGASA), serve as a signal peptide directing secretion. Cysteine 52 and cysteine 75 are joined by a disulfide. An N-linked (GlcNAc...) asparagine glycan is attached at asparagine 103. 4 cysteine pairs are disulfide-bonded: cysteine 107–cysteine 143, cysteine 188–cysteine 260, cysteine 191–cysteine 284, and cysteine 201–cysteine 306.

Belongs to the meteorin family. N-glycosylated. In terms of tissue distribution, highly expressed in subcutaneous adipose tissue.

The protein resides in the secreted. Its function is as follows. Hormone induced following exercise or cold exposure that promotes energy expenditure. Induced either in the skeletal muscle after exercise or in adipose tissue following cold exposure and is present in the circulation. Able to stimulate energy expenditure associated with the browning of the white fat depots and improves glucose tolerance. Does not promote an increase in a thermogenic gene program via direct action on adipocytes, but acts by stimulating several immune cell subtypes to enter the adipose tissue and activate their prothermogenic actions. Stimulates an eosinophil-dependent increase in IL4 expression and promotes alternative activation of adipose tissue macrophages, which are required for the increased expression of the thermogenic and anti-inflammatory gene programs in fat. Required for some cold-induced thermogenic responses, suggesting a role in metabolic adaptations to cold temperatures. The polypeptide is Meteorin-like protein (Metrnl) (Mus musculus (Mouse)).